A 1679-amino-acid polypeptide reads, in one-letter code: Furin-like protease 2 (1679 aa).

Polar residues predominate over residues 1–10 (MSNTTRSSRV). The segment at 1–42 (MSNTTRSSRVTIGRIGTTPQITDPWSSGLEKQRPSRCGGPKS) is disordered. Asparagine 3, asparagine 109, and asparagine 130 each carry an N-linked (GlcNAc...) asparagine glycan. The segment at 139–164 (VSSLHSSRRTNPPSSSSSSSSNVDVD) is disordered. The span at 147–160 (RTNPPSSSSSSSSN) shows a compositional bias: low complexity. An N-linked (GlcNAc...) asparagine glycan is attached at asparagine 205. In terms of domain architecture, Peptidase S8 spans 383 to 705 (QWYLNGGAKD…YGLMDAGAMV (323 aa)). The active-site Charge relay system is the aspartate 417. Positions 424–456 (HPDLAQNYDPEASFDINGNDSDPTPQDNGDNKH) are disordered. The span at 439–451 (INGNDSDPTPQDN) shows a compositional bias: polar residues. Residue asparagine 442 is glycosylated (N-linked (GlcNAc...) asparagine). Catalysis depends on histidine 456, which acts as the Charge relay system. Cystine bridges form between cysteine 473–cysteine 629 and cysteine 565–cysteine 595. The N-linked (GlcNAc...) asparagine glycan is linked to asparagine 480. The Charge relay system role is filled by serine 637. In terms of domain architecture, P/Homo B spans 714-852 (VPPQHICKSR…QLIFYGTSTQ (139 aa)). An intrachain disulfide couples cysteine 720 to cysteine 748. The N-linked (GlcNAc...) asparagine glycan is linked to asparagine 927. FU repeat units lie at residues 961–1006 (KKIL…RSFP), 1009–1056 (VGIC…GYFE), 1060–1104 (NRTC…DTYE), 1107–1152 (DNKC…GFYA), 1156–1204 (RLEC…SEFY), 1208–1253 (EGQC…GFFV), 1256–1299 (GSLC…GYYS), 1301–1346 (RGIC…GFYK), 1348–1393 (DFGC…QYYD), and 1396–1443 (SATC…QTLA). The N-linked (GlcNAc...) asparagine glycan is linked to asparagine 1060. N-linked (GlcNAc...) asparagine glycosylation is present at asparagine 1181. Residues asparagine 1274 and asparagine 1277 are each glycosylated (N-linked (GlcNAc...) asparagine). An N-linked (GlcNAc...) asparagine glycan is attached at asparagine 1439. The helical transmembrane segment at 1512-1532 (AIAVAICLLIITIFSIIFAVL) threads the bilayer. Topologically, residues 1533–1679 (QRNSNHVSRN…STTSRTNIRS (147 aa)) are cytoplasmic. The segment at 1660–1679 (TNAERKNHPSSTTSRTNIRS) is disordered. Polar residues predominate over residues 1668-1679 (PSSTTSRTNIRS).

This sequence belongs to the peptidase S8 family. Furin subfamily. The cofactor is Ca(2+). As to expression, transient expression in a subset of central nervous system neurons during embryonic stages 12-13. Expression in developing tracheal tree from stage 13 to end of embryonic development.

Its subcellular location is the membrane. The enzyme catalyses Release of mature proteins from their proproteins by cleavage of -Arg-Xaa-Yaa-Arg-|-Zaa- bonds, where Xaa can be any amino acid and Yaa is Arg or Lys. Releases albumin, complement component C3 and von Willebrand factor from their respective precursors.. Its function is as follows. Furin is likely to represent the ubiquitous endoprotease activity within constitutive secretory pathways and capable of cleavage at the RX(K/R)R consensus motif. The protein is Furin-like protease 2 (Fur2) of Drosophila melanogaster (Fruit fly).